A 118-amino-acid polypeptide reads, in one-letter code: MKKFSCGFEVTKEVIGGKWKGLVLYFLMNGPKRTSELKRIIPNITQKMLIQTLRELEASGLVSRKMYNQVPPKVEYSSTELGESLKPILQELCQWGGYYAEQEYAEGEYEIVQPEQLS.

The HTH hxlR-type domain occupies Cys6–Tyr104.

This is an uncharacterized protein from Bacillus subtilis (strain 168).